Reading from the N-terminus, the 97-residue chain is MKRICSIYKSPRKNEMYLYVLKADGLERVPEGLLPFFGTPMHAFDLVLSPERKLAREDITKVLENLDNQGYHLQMPPAEDEYIEHLPEELLRRNDPV.

The 85-residue stretch at 3 to 87 folds into the YcgL domain; that stretch reads RICSIYKSPR…AEDEYIEHLP (85 aa).

This Pseudomonas putida (strain GB-1) protein is YcgL domain-containing protein PputGB1_4120.